The sequence spans 272 residues: Dickkopf-related protein 1 (272 aa).

Residues 1–31 (MMVVCAAAAVRFLAVFTMMALCSLPLLGASA) form the signal peptide. Residue S62 is glycosylated (O-linked (GalNAc...) serine). Cystine bridges form between C86–C98, C92–C114, C117–C131, C124–C136, C130–C141, C195–C207, C201–C216, C206–C243, C226–C251, and C245–C269. Residues 86 to 141 (CAEDEECGSDEYCSSPSRGAAGVGGVQICLACRKRRKRCMRHAMCCPGNYCKNGIC) form a DKK-type Cys-1 region. The tract at residues 195-269 (CLRSSDCAAG…ASNSSRLHTC (75 aa)) is DKK-type Cys-2. Residue N262 is glycosylated (N-linked (GlcNAc...) asparagine).

It belongs to the dickkopf family. In terms of assembly, interacts (via the C-terminal Cys-rich domain) with LRP5 (via beta-propeller regions 3 and 4); the interaction, enhanced by MESD and or KREMEN, antagonizes Wnt-mediated signaling. Interacts with LRP6. Forms a ternary complex with LRP6 and KREM1. Interacts with KREM1.

It is found in the secreted. In terms of biological role, antagonizes canonical Wnt signaling by inhibiting LRP5/6 interaction with Wnt and by forming a ternary complex with the transmembrane protein KREMEN that promotes internalization of LRP5/6. Inhibits the pro-apoptotic function of KREMEN1 in a Wnt-independent manner, and has anti-apoptotic activity. Plays a role in limb development; attenuates Wnt signaling in the developing limb to allow normal limb patterning. The protein is Dickkopf-related protein 1 (Dkk1) of Mus musculus (Mouse).